We begin with the raw amino-acid sequence, 3630 residues long: Trimeric autotransporter adhesin AtaA (3630 aa).

The signal sequence occupies residues 1–23 (MNKIYKVIWNATLLAWVAVSELA). Residues 24–3487 (KGKTKSTTSK…TNQAVVNYLG (3464 aa)) are surface exposed passenger domain. Residues 108-315 (SIAIGENAQG…ASDAVTVAQL (208 aa)) are N-terminal YadA-like head. Residues 316–2904 (DKAYDDTNGR…GRAATEEQLK (2589 aa)) are N-terminal stalk. Positions 2905 to 3169 (AVITSNITEV…DSDAVNVAQL (265 aa)) are C-terminal YadA-like head. Residues 3170–3561 (KAVGNQVVTT…DVEKKANAGI (392 aa)) are C-terminal stalk. The outer membrane translocation of the passenger domain stretch occupies residues 3539-3574 (LDNAFRITNNRIDDVEKKANAGIAAAMALESAPYVP). Beta stranded transmembrane passes span 3575 to 3585 (GKYTYAAGAAY), 3589 to 3599 (ENAVGVTLRKT), 3608 to 3614 (TGGVAAA), and 3618 to 3629 (DASVRIGISGVI). The tract at residues 3575–3630 (GKYTYAAGAAYHGGENAVGVTLRKTADNGRWSITGGVAAASQGDASVRIGISGVID) is translocator domain.

This sequence belongs to the autotransporter-2 (AT-2) (TC 1.B.40) family. As to quaternary structure, homotrimer. Interacts with TpgA.

The protein localises to the cell surface. Its subcellular location is the cell outer membrane. Responsible for autoagglutination, and for adhesion to abiotic and biotic surfaces such as polystyrene (PS), type I collagen, polypropylene (PP), polyvinylchloride (PVC), glass and stainless steel (SS). Adhesion is much stronger than that mediated by Yersinia YadA in a comparative assay. Confers autoagglutination and binding to PS, type I collagen, PP, PVC, glass and SS upon expression in Acinetobacter baylyi strain ADP1. Involved in rapid, irreversible adherence to polyurethane. Forms an unusual biofilm. An extended, surface exposed fiber binds to quartz crystals, PS and glass. It can be removed by washing in distilled water. The protein is Trimeric autotransporter adhesin AtaA of Acinetobacter sp. (strain Tol 5).